A 132-amino-acid chain; its full sequence is Large ribosomal subunit protein uL14 (132 aa).

This sequence belongs to the universal ribosomal protein uL14 family. As to quaternary structure, part of the 50S ribosomal subunit. Forms a cluster with proteins L3 and L24e, part of which may contact the 16S rRNA in 2 intersubunit bridges.

Binds to 23S rRNA. Forms part of two intersubunit bridges in the 70S ribosome. The polypeptide is Large ribosomal subunit protein uL14 (Methanococcus aeolicus (strain ATCC BAA-1280 / DSM 17508 / OCM 812 / Nankai-3)).